Reading from the N-terminus, the 302-residue chain is Methionyl-tRNA formyltransferase (302 aa).

Serine 108–proline 111 provides a ligand contact to (6S)-5,6,7,8-tetrahydrofolate.

The protein belongs to the Fmt family.

The enzyme catalyses L-methionyl-tRNA(fMet) + (6R)-10-formyltetrahydrofolate = N-formyl-L-methionyl-tRNA(fMet) + (6S)-5,6,7,8-tetrahydrofolate + H(+). Its function is as follows. Attaches a formyl group to the free amino group of methionyl-tRNA(fMet). The formyl group appears to play a dual role in the initiator identity of N-formylmethionyl-tRNA by promoting its recognition by IF2 and preventing the misappropriation of this tRNA by the elongation apparatus. The sequence is that of Methionyl-tRNA formyltransferase from Cereibacter sphaeroides (strain ATCC 17025 / ATH 2.4.3) (Rhodobacter sphaeroides).